A 352-amino-acid chain; its full sequence is Phosphoribosylformylglycinamidine cyclo-ligase (352 aa).

The protein belongs to the AIR synthase family.

Its subcellular location is the cytoplasm. It catalyses the reaction 2-formamido-N(1)-(5-O-phospho-beta-D-ribosyl)acetamidine + ATP = 5-amino-1-(5-phospho-beta-D-ribosyl)imidazole + ADP + phosphate + H(+). Its pathway is purine metabolism; IMP biosynthesis via de novo pathway; 5-amino-1-(5-phospho-D-ribosyl)imidazole from N(2)-formyl-N(1)-(5-phospho-D-ribosyl)glycinamide: step 2/2. In Nitrosospira multiformis (strain ATCC 25196 / NCIMB 11849 / C 71), this protein is Phosphoribosylformylglycinamidine cyclo-ligase.